A 500-amino-acid chain; its full sequence is Lysine--tRNA ligase (500 aa).

Mg(2+) contacts are provided by Glu409 and Glu416.

It belongs to the class-II aminoacyl-tRNA synthetase family. In terms of assembly, homodimer. Mg(2+) serves as cofactor.

The protein resides in the cytoplasm. It catalyses the reaction tRNA(Lys) + L-lysine + ATP = L-lysyl-tRNA(Lys) + AMP + diphosphate. This chain is Lysine--tRNA ligase, found in Lysinibacillus sphaericus (strain C3-41).